A 630-amino-acid chain; its full sequence is Auxin efflux carrier component 2 (630 aa).

Topologically, residues 1-6 (MITGRD) are extracellular. The helical transmembrane segment at 7 to 27 (IYDVLAAIVPLYVAMFLAYGS) threads the bilayer. Topologically, residues 28 to 38 (VRWWGIFTPDQ) are cytoplasmic. Residues 39–59 (CSGINRFVAVFAVPLLSFHFI) form a helical membrane-spanning segment. Val-51 is a (indol-3-yl)acetate binding site. Over 60-70 (STNDPYSMNYR) the chain is Extracellular. A helical transmembrane segment spans residues 71 to 91 (FLAADSLQKLVILAALAVWHN). The Cytoplasmic segment spans residues 92–108 (LLSRYRRNGGAAASLDW). The chain crosses the membrane as a helical span at residues 109 to 129 (TITLFSLSTLPNTLVMGIPLL). Positions 120 and 122 each coordinate (indol-3-yl)acetate. Over 130-139 (RAMYGDFSGS) the chain is Extracellular. A helical transmembrane segment spans residues 140-160 (LMVQIVVLQSVIWYTLMLFLF). Tyr-153 provides a ligand contact to (indol-3-yl)acetate. At 161-490 (EYRGAKALIS…LIRNPNTYSS (330 aa)) the chain is on the cytoplasmic side. Residues 317–350 (ASGKAADPPSYPAPNPGMMPAPRKKELGGSNSNS) form a disordered region. Over residues 325–335 (PSYPAPNPGMM) the composition is skewed to pro residues. A helical membrane pass occupies residues 491–511 (LIGLVWSLVSFRWNIQMPSII). Residues 512–514 (KGS) are Extracellular-facing. The chain crosses the membrane as a helical span at residues 515-535 (ISILSDAGLGMAMFSLGLFMA). Topologically, residues 536–549 (LQPKIISCGKTVAT) are cytoplasmic. Residues 550–570 (FAMAVRFLTGPAVIAATSIAI) form a helical membrane-spanning segment. The Extracellular portion of the chain corresponds to 571–574 (GLRG). The helical transmembrane segment at 575 to 595 (VLLHVAIVQAALPQGIVPFVF) threads the bilayer. 2 residues coordinate (indol-3-yl)acetate: Ile-590 and Val-591. Residues 596-609 (AKEYNCHPQILSTA) are Cytoplasmic-facing. The helical transmembrane segment at 610–630 (VIFGMLIALPITILYYVLLGI) threads the bilayer.

It belongs to the auxin efflux carrier (TC 2.A.69.1) family. Homodimer. In terms of tissue distribution, expressed in roots, leaves, shoot apex and panicles. Expressed in roots, stem bases and young panicles.

It is found in the membrane. Its function is as follows. Acts as a component of the auxin efflux carrier. Involved in the basipetal polar auxin transport which contributes to the spreading growth of the tillers. This Oryza sativa subsp. japonica (Rice) protein is Auxin efflux carrier component 2.